The sequence spans 428 residues: Serine--tRNA ligase (428 aa).

231–233 (TAE) contacts L-serine. 262–264 (RSE) contributes to the ATP binding site. L-serine is bound at residue glutamate 285. 349-352 (EISS) contacts ATP. Serine 385 is an L-serine binding site.

Belongs to the class-II aminoacyl-tRNA synthetase family. Type-1 seryl-tRNA synthetase subfamily. In terms of assembly, homodimer. The tRNA molecule binds across the dimer.

It is found in the cytoplasm. It catalyses the reaction tRNA(Ser) + L-serine + ATP = L-seryl-tRNA(Ser) + AMP + diphosphate + H(+). The catalysed reaction is tRNA(Sec) + L-serine + ATP = L-seryl-tRNA(Sec) + AMP + diphosphate + H(+). The protein operates within aminoacyl-tRNA biosynthesis; selenocysteinyl-tRNA(Sec) biosynthesis; L-seryl-tRNA(Sec) from L-serine and tRNA(Sec): step 1/1. Its function is as follows. Catalyzes the attachment of serine to tRNA(Ser). Is also able to aminoacylate tRNA(Sec) with serine, to form the misacylated tRNA L-seryl-tRNA(Sec), which will be further converted into selenocysteinyl-tRNA(Sec). The sequence is that of Serine--tRNA ligase from Staphylococcus aureus (strain bovine RF122 / ET3-1).